Here is a 302-residue protein sequence, read N- to C-terminus: EQCGRQAGGALCPGGLCCSQFGWCGSTADYCTVPGCQSQCSGSGPAPGPGGLTNLISRETFNQMLLHRNDGACPARGFYTYDAFIAAARSFPAFATTGDQATRKREIAAFLAQTSHETTGGAGWAAPDGPYAWGYCYNRELNPPSSYCASDPNYPCAPGKQYFGRGPMQLSWNYNYGQCGRAIGVDLLNNPDLLSSDPTISFKSAFWFWMTPQSPKPSCHNVIIGAWSPSSSDRAAGRATGYGVITNIINGGLECGKGWNAQVEDRIGFYKRYCDILGVSYGNNLDCYNQSPFGNGVSVDSM.

The region spanning 1–42 is the Chitin-binding type-1 domain; it reads EQCGRQAGGALCPGGLCCSQFGWCGSTADYCTVPGCQSQCSG. 7 disulfides stabilise this stretch: C3–C18, C12–C24, C17–C31, C36–C40, C73–C136, C148–C156, and C255–C287. Catalysis depends on E117, which acts as the Proton donor. A propeptide spans 296–302 (removed in mature form); it reads GVSVDSM.

The protein belongs to the glycosyl hydrolase 19 family. Chitinase class I subfamily.

It catalyses the reaction Random endo-hydrolysis of N-acetyl-beta-D-glucosaminide (1-&gt;4)-beta-linkages in chitin and chitodextrins.. Its function is as follows. Defense against chitin-containing fungal pathogens. The protein is Endochitinase 2 of Gossypium hirsutum (Upland cotton).